A 212-amino-acid chain; its full sequence is Large ribosomal subunit protein uL1 (212 aa).

It belongs to the universal ribosomal protein uL1 family. In terms of assembly, part of the 50S ribosomal subunit.

Binds directly to 23S rRNA. Probably involved in E site tRNA release. Functionally, protein L1 is also a translational repressor protein, it controls the translation of its operon by binding to its mRNA. The sequence is that of Large ribosomal subunit protein uL1 from Haloferax volcanii (strain ATCC 29605 / DSM 3757 / JCM 8879 / NBRC 14742 / NCIMB 2012 / VKM B-1768 / DS2) (Halobacterium volcanii).